The sequence spans 428 residues: Adenylosuccinate synthetase (428 aa).

GTP-binding positions include Gly-12–Lys-18 and Gly-40–Thr-42. Asp-13 serves as the catalytic Proton acceptor. Mg(2+) is bound by residues Asp-13 and Gly-40. Residues Asp-13–Lys-16, Asn-38–His-41, Thr-130, Arg-144, Gln-225, Thr-240, and Arg-304 each bind IMP. The active-site Proton donor is His-41. Val-300–Arg-306 is a substrate binding site. GTP is bound by residues Arg-306, Lys-332–Asp-334, and Gly-414–Gly-416.

The protein belongs to the adenylosuccinate synthetase family. In terms of assembly, homodimer. It depends on Mg(2+) as a cofactor.

Its subcellular location is the cytoplasm. It carries out the reaction IMP + L-aspartate + GTP = N(6)-(1,2-dicarboxyethyl)-AMP + GDP + phosphate + 2 H(+). It functions in the pathway purine metabolism; AMP biosynthesis via de novo pathway; AMP from IMP: step 1/2. Functionally, plays an important role in the de novo pathway of purine nucleotide biosynthesis. Catalyzes the first committed step in the biosynthesis of AMP from IMP. This is Adenylosuccinate synthetase from Clostridium botulinum (strain Alaska E43 / Type E3).